A 502-amino-acid polypeptide reads, in one-letter code: ATP synthase subunit alpha (502 aa).

Residue 169–176 participates in ATP binding; sequence GDRQTGKT.

It belongs to the ATPase alpha/beta chains family. In terms of assembly, F-type ATPases have 2 components, CF(1) - the catalytic core - and CF(0) - the membrane proton channel. CF(1) has five subunits: alpha(3), beta(3), gamma(1), delta(1), epsilon(1). CF(0) has three main subunits: a(1), b(2) and c(9-12). The alpha and beta chains form an alternating ring which encloses part of the gamma chain. CF(1) is attached to CF(0) by a central stalk formed by the gamma and epsilon chains, while a peripheral stalk is formed by the delta and b chains.

The protein localises to the cell inner membrane. The enzyme catalyses ATP + H2O + 4 H(+)(in) = ADP + phosphate + 5 H(+)(out). Produces ATP from ADP in the presence of a proton gradient across the membrane. The alpha chain is a regulatory subunit. This chain is ATP synthase subunit alpha, found in Thermodesulfovibrio yellowstonii (strain ATCC 51303 / DSM 11347 / YP87).